Here is a 312-residue protein sequence, read N- to C-terminus: Malate dehydrogenase (312 aa).

Residues 7–13 and Asp34 each bind NAD(+); that span reads GAAGGIG. Substrate contacts are provided by Arg81 and Arg87. NAD(+)-binding positions include Asn94 and 117–119; that span reads ITN. The substrate site is built by Asn119 and Arg153. Residue His177 is the Proton acceptor of the active site. Met227 contacts NAD(+).

The protein belongs to the LDH/MDH superfamily. MDH type 1 family. Homodimer.

The catalysed reaction is (S)-malate + NAD(+) = oxaloacetate + NADH + H(+). Functionally, catalyzes the reversible oxidation of malate to oxaloacetate. The sequence is that of Malate dehydrogenase from Shigella dysenteriae serotype 1 (strain Sd197).